Reading from the N-terminus, the 499-residue chain is MNHFPWLTIIVLFPISAGLVIPFLPSTGNKIIRWYTLGVCLLEFLLITYIFCYHYQFNDHLIQLKEDYNWISFINFHWRLGIDGFSIGLILLTGFITTLATLAAWPVTRNPRLFYFLMLAMYSGQIGLFASQDILLFFFMWELELLPVYLLLAMWGGKRRLYAATKFILYTAAGSLFILIGGLIMAFYNSNEFTFDFQFLINKKYPLELEIIIYLSFLIAYAVKLPIIPFHTWLPDTHGEAHYSTCMLLAGILLKMGAYGLIRINMELLPHAHSFFAPWLVIVGAIQIVYAALTSLSQRNLKRRIAYSSVSHMGFVLIGIGSITNLGLNGAILQMISHGLIGASLFFLAGISYDRTRTLVLDQMGGIGNSMPKIFTLFTSCSMASLALPGMSGFIAELMIFLGVIDNPNYSSLFKIIIIIIQGIGIILTPIYLLSMLRQMFYGYKFSNTLEPYFMDAGPREIFILICLFFPIISIGIYPNFVLSIWNSKVNFLLSNNFF.

The next 14 helical transmembrane spans lie at 4-24 (FPWL…IPFL), 31-51 (IIRW…TYIF), 87-107 (IGLI…AWPV), 113-133 (LFYF…ASQD), 134-154 (ILLF…LLAM), 167-187 (FILY…IMAF), 211-231 (IIIY…IPFH), 242-262 (HYST…YGLI), 274-294 (SFFA…AALT), 310-330 (VSHM…GLNG), 331-351 (AILQ…LAGI), 385-405 (SLAL…LGVI), 416-436 (IIII…LLSM), and 462-482 (IFIL…PNFV).

Belongs to the complex I subunit 4 family.

Its subcellular location is the plastid. The protein resides in the chloroplast thylakoid membrane. It carries out the reaction a plastoquinone + NADH + (n+1) H(+)(in) = a plastoquinol + NAD(+) + n H(+)(out). The enzyme catalyses a plastoquinone + NADPH + (n+1) H(+)(in) = a plastoquinol + NADP(+) + n H(+)(out). This is NAD(P)H-quinone oxidoreductase chain 4, chloroplastic (ndhD) from Marchantia polymorpha (Common liverwort).